Reading from the N-terminus, the 931-residue chain is Bifunctional uridylyltransferase/uridylyl-removing enzyme (931 aa).

Positions 1–383 (MDSVTPNSRP…KTGNSWRRVP (383 aa)) are uridylyltransferase. A uridylyl-removing region spans residues 384–739 (ESDDFIVDNN…VGFDPARGVT (356 aa)). An HD domain is found at 499–622 (VDEHLIRCIG…VQSVEQMKLL (124 aa)). ACT domains are found at residues 740–822 (ELTI…AVAR) and 851–931 (VIEV…QPAA).

It belongs to the GlnD family. Mg(2+) is required as a cofactor.

It carries out the reaction [protein-PII]-L-tyrosine + UTP = [protein-PII]-uridylyl-L-tyrosine + diphosphate. It catalyses the reaction [protein-PII]-uridylyl-L-tyrosine + H2O = [protein-PII]-L-tyrosine + UMP + H(+). With respect to regulation, uridylyltransferase (UTase) activity is inhibited by glutamine, while glutamine activates uridylyl-removing (UR) activity. Its function is as follows. Modifies, by uridylylation and deuridylylation, the PII regulatory proteins (GlnB and homologs), in response to the nitrogen status of the cell that GlnD senses through the glutamine level. Under low glutamine levels, catalyzes the conversion of the PII proteins and UTP to PII-UMP and PPi, while under higher glutamine levels, GlnD hydrolyzes PII-UMP to PII and UMP (deuridylylation). Thus, controls uridylylation state and activity of the PII proteins, and plays an important role in the regulation of nitrogen fixation and metabolism. This is Bifunctional uridylyltransferase/uridylyl-removing enzyme from Bradyrhizobium sp. (strain BTAi1 / ATCC BAA-1182).